The primary structure comprises 512 residues: Alpha-amylase (512 aa).

An N-terminal signal peptide occupies residues 1–15 (MKLFVLIALFGLGFA). 3 disulfide bridges follow: Cys43–Cys101, Cys85–Cys130, and Cys156–Cys175. Ca(2+)-binding residues include Asn115, Arg173, and Asp182. Chloride is bound at residue Arg210. The active-site Nucleophile is the Asp212. His216 provides a ligand contact to Ca(2+). Glu248 acts as the Proton donor in catalysis. Arg352 contributes to the chloride binding site. 2 disulfides stabilise this stretch: Cys394-Cys400 and Cys466-Cys478. N-linked (GlcNAc...) asparagine glycosylation occurs at Asn496.

It belongs to the glycosyl hydrolase 13 family. Requires Ca(2+) as cofactor. The cofactor is chloride.

The protein localises to the secreted. The enzyme catalyses Endohydrolysis of (1-&gt;4)-alpha-D-glucosidic linkages in polysaccharides containing three or more (1-&gt;4)-alpha-linked D-glucose units.. Its function is as follows. Catalyzes the hydrolysis of alpha-1,4 glycosidic linkages in starch, glycogen and similar oligosaccharides. The protein is Alpha-amylase of Oryzias latipes (Japanese rice fish).